A 280-amino-acid chain; its full sequence is Ribosomal RNA small subunit methyltransferase I (280 aa).

Belongs to the methyltransferase superfamily. RsmI family.

Its subcellular location is the cytoplasm. The catalysed reaction is cytidine(1402) in 16S rRNA + S-adenosyl-L-methionine = 2'-O-methylcytidine(1402) in 16S rRNA + S-adenosyl-L-homocysteine + H(+). In terms of biological role, catalyzes the 2'-O-methylation of the ribose of cytidine 1402 (C1402) in 16S rRNA. In Rickettsia prowazekii (strain Madrid E), this protein is Ribosomal RNA small subunit methyltransferase I.